Consider the following 316-residue polypeptide: Large ribosomal subunit protein uL10 (316 aa).

The segment at 289–316 (AAAAAPAKEAPKEESEESDEDMGFGLFD) is disordered.

Belongs to the universal ribosomal protein uL10 family. P0 forms a pentameric complex by interaction with dimers of P1 and P2. Post-translationally, phosphorylated.

It is found in the nucleus. The protein resides in the cytoplasm. Functionally, ribosomal protein P0 is the functional equivalent of E.coli protein L10. The polypeptide is Large ribosomal subunit protein uL10 (RPLP0) (Gallus gallus (Chicken)).